The chain runs to 99 residues: Nucleoid-associated protein EbfC (99 aa).

Belongs to the YbaB/EbfC family. Homodimer.

The protein localises to the cytoplasm. It localises to the nucleoid. Binds to DNA and alters its conformation. May be involved in regulation of gene expression, nucleoid organization and DNA protection. This is Nucleoid-associated protein EbfC from Borrelia duttonii (strain Ly).